Here is a 119-residue protein sequence, read N- to C-terminus: Holo-[acyl-carrier-protein] synthase (119 aa).

Residues aspartate 7 and glutamate 53 each contribute to the Mg(2+) site.

The protein belongs to the P-Pant transferase superfamily. AcpS family. Mg(2+) is required as a cofactor.

The protein localises to the cytoplasm. The enzyme catalyses apo-[ACP] + CoA = holo-[ACP] + adenosine 3',5'-bisphosphate + H(+). In terms of biological role, transfers the 4'-phosphopantetheine moiety from coenzyme A to a Ser of acyl-carrier-protein. This is Holo-[acyl-carrier-protein] synthase from Dehalococcoides mccartyi (strain CBDB1).